The chain runs to 86 residues: Progonadoliberin-2 (86 aa).

A signal peptide spans 1–24 (MVSVCRLLLVAALLLCLQAQLSFS). Glutamine 25 carries the post-translational modification Pyrrolidone carboxylic acid. Glycine 34 carries the post-translational modification Glycine amide.

This sequence belongs to the GnRH family.

It localises to the secreted. Stimulates the secretion of gonadotropins. The protein is Progonadoliberin-2 (gnrh2) of Clarias gariepinus (North African catfish).